A 299-amino-acid chain; its full sequence is Riboflavin transporter ImpX (299 aa).

2 EamA domains span residues 6–144 (KGAL…YLLT) and 162–294 (SLYS…SIIK). 10 helical membrane passes run 7–27 (GALL…ALTP), 34–54 (VPFV…ILFG), 68–88 (DLFF…LCIV), 101–121 (VVTL…RLLL), 129–149 (YLFW…EFHL), 158–178 (LLPA…ATVF), 202–222 (IMFV…ATAG), 224–244 (WLIF…LYYF), 253–273 (VATM…YLIN), and 276–296 (VLSP…IKIS).

It belongs to the EamA transporter family.

It localises to the cell membrane. Its function is as follows. Transports riboflavin into the cell. The chain is Riboflavin transporter ImpX from Fusobacterium nucleatum subsp. nucleatum (strain ATCC 23726 / VPI 4351).